We begin with the raw amino-acid sequence, 191 residues long: Thymidylate kinase (191 aa).

7 to 14 (GVDGAGKS) provides a ligand contact to ATP.

It belongs to the thymidylate kinase family.

The catalysed reaction is dTMP + ATP = dTDP + ADP. Phosphorylation of dTMP to form dTDP in both de novo and salvage pathways of dTTP synthesis. The polypeptide is Thymidylate kinase (Helicobacter pylori (strain Shi470)).